The following is a 540-amino-acid chain: NADH-quinone oxidoreductase subunit N (540 aa).

The next 14 membrane-spanning stretches (helical) occupy residues Leu24–Leu44, Leu54–Thr74, Pro88–Ala108, Ala158–Phe178, Leu184–Leu204, Tyr219–Gly239, Ala263–Phe283, Pro295–Leu315, Pro331–Gln351, Met357–Asn377, Met385–Val405, Val428–Phe448, Gly462–Val482, and Met505–Pro525.

Belongs to the complex I subunit 2 family. In terms of assembly, NDH-1 is composed of 14 different subunits. Subunits NuoA, H, J, K, L, M, N constitute the membrane sector of the complex.

Its subcellular location is the cell membrane. The enzyme catalyses a quinone + NADH + 5 H(+)(in) = a quinol + NAD(+) + 4 H(+)(out). Its function is as follows. NDH-1 shuttles electrons from NADH, via FMN and iron-sulfur (Fe-S) centers, to quinones in the respiratory chain. The immediate electron acceptor for the enzyme in this species is believed to be a menaquinone. Couples the redox reaction to proton translocation (for every two electrons transferred, four hydrogen ions are translocated across the cytoplasmic membrane), and thus conserves the redox energy in a proton gradient. In Rhodococcus opacus (strain B4), this protein is NADH-quinone oxidoreductase subunit N.